A 440-amino-acid chain; its full sequence is Probable exopolygalacturonase C (440 aa).

The N-terminal stretch at 1–21 is a signal peptide; it reads MLITNPALLGILASLVPLALG. Asn84 and Asn151 each carry an N-linked (GlcNAc...) asparagine glycan. PbH1 repeat units lie at residues 188-210, 217-238, and 240-261; these read GDDITVSHAIVDATSTGGFPFNT, GTNISITDSVMFNGDDAIAVNT, and SHNIVFARNTIGYQSHGMSIGS. An N-linked (GlcNAc...) asparagine glycan is attached at Asn219. Asp231 functions as the Proton donor in the catalytic mechanism. His255 is an active-site residue. An N-linked (GlcNAc...) asparagine glycan is attached at Asn271. The stretch at 272–293 is one PbH1 4 repeat; the sequence is ITNLRFEDVTVIDALYAARFKS. Asn313 carries an N-linked (GlcNAc...) asparagine glycan. A disulfide bridge connects residues Cys389 and Cys395. N-linked (GlcNAc...) asparagine glycosylation is present at Asn434.

The protein belongs to the glycosyl hydrolase 28 family.

It localises to the secreted. It catalyses the reaction [(1-&gt;4)-alpha-D-galacturonosyl](n) + H2O = alpha-D-galacturonate + [(1-&gt;4)-alpha-D-galacturonosyl](n-1). Its function is as follows. Specific in hydrolyzing the terminal glycosidic bond of polygalacturonic acid and oligogalacturonates. The protein is Probable exopolygalacturonase C (pgxC) of Aspergillus fumigatus (strain CBS 144.89 / FGSC A1163 / CEA10) (Neosartorya fumigata).